The primary structure comprises 89 residues: uncharacterized protein (89 aa).

Positions 66–89 (RIKEQSSSSSATRTTQEPSLHLPD) are disordered.

This is an uncharacterized protein from Cestrum parqui (CmYLCV).